Consider the following 260-residue polypeptide: 3-methyl-2-oxobutanoate hydroxymethyltransferase (260 aa).

2 residues coordinate Mg(2+): aspartate 42 and aspartate 81. 3-methyl-2-oxobutanoate-binding positions include 42 to 43, aspartate 81, and lysine 109; that span reads DS. A Mg(2+)-binding site is contributed by glutamate 111. Glutamate 178 serves as the catalytic Proton acceptor.

Belongs to the PanB family. In terms of assembly, homodecamer; pentamer of dimers. Mg(2+) is required as a cofactor.

It localises to the cytoplasm. It carries out the reaction 3-methyl-2-oxobutanoate + (6R)-5,10-methylene-5,6,7,8-tetrahydrofolate + H2O = 2-dehydropantoate + (6S)-5,6,7,8-tetrahydrofolate. It functions in the pathway cofactor biosynthesis; (R)-pantothenate biosynthesis; (R)-pantoate from 3-methyl-2-oxobutanoate: step 1/2. Catalyzes the reversible reaction in which hydroxymethyl group from 5,10-methylenetetrahydrofolate is transferred onto alpha-ketoisovalerate to form ketopantoate. This chain is 3-methyl-2-oxobutanoate hydroxymethyltransferase, found in Ruthia magnifica subsp. Calyptogena magnifica.